We begin with the raw amino-acid sequence, 447 residues long: MSEKLDEVDSKSLDEINGSIKVPKNAGFWKTLMAYSGPGFLIAVGYMDPGNWITSIAGGAQFRYTLLSVILLSSLIAMLLQAMSARLGIVTGKDLAQLTRERTSKRVGFLLWIVAELAIMATDIAEIIGSGIALELLFHIPLIIGILITAADVLILLLLMKLGFRKIEAIVATLVAVILIVFAYEVLLSDPSISGIIKGYVPSVEILGNNSMLYLSLGIVGATVMPHDLYLGSSISQTREVDRKDRENVAQAIRFSTIDSNMQLFLAFIVNSLLLILGAALFYGTDSSLGRFVDLFNALSNNQIVGAIASPVLSMLFAVALLASGQSSTITGTLSGQIIMEGFIRLRVPLWVQRLVTRVLSVAPVLIFAIYYHGDEAKIENLLTFSQVFLSVALPFAVIPLVIYTSSKKLMGEFANRAWVKWCAWTATIVLILLNIYLILQTLGLIK.

11 helical membrane passes run Ala26–Asp48, Thr65–Ala85, Gly108–Ile128, Ile140–Met160, Ala169–Ser189, Met212–Gly232, Leu264–Gly284, Ile304–Ser324, Val359–Ile379, Leu383–Ile403, and Thr426–Ile446.

This sequence belongs to the NRAMP family.

The protein localises to the cell membrane. H(+)-stimulated, divalent metal cation uptake system. The protein is Divalent metal cation transporter MntH of Pediococcus pentosaceus (strain ATCC 25745 / CCUG 21536 / LMG 10740 / 183-1w).